We begin with the raw amino-acid sequence, 343 residues long: L-threonine 3-dehydrogenase (343 aa).

Zn(2+) is bound at residue Cys38. Active-site charge relay system residues include Thr40 and His43. Residues His63, Glu64, Cys93, Cys96, Cys99, and Cys107 each contribute to the Zn(2+) site. NAD(+)-binding positions include Ile175, Asp195, Arg200, 262–264, and 286–287; these read LGI and IY.

Belongs to the zinc-containing alcohol dehydrogenase family. As to quaternary structure, homotetramer. Requires Zn(2+) as cofactor.

It localises to the cytoplasm. It catalyses the reaction L-threonine + NAD(+) = (2S)-2-amino-3-oxobutanoate + NADH + H(+). Its pathway is amino-acid degradation; L-threonine degradation via oxydo-reductase pathway; glycine from L-threonine: step 1/2. In terms of biological role, catalyzes the NAD(+)-dependent oxidation of L-threonine to 2-amino-3-ketobutyrate. This chain is L-threonine 3-dehydrogenase, found in Paraburkholderia xenovorans (strain LB400).